We begin with the raw amino-acid sequence, 395 residues long: Gastric triacylglycerol lipase (395 aa).

The first 18 residues, 1-18, serve as a signal peptide directing secretion; it reads MWLLLVTSVLSAFGGAHG. A glycan (N-linked (GlcNAc...) asparagine) is linked at N33. One can recognise an AB hydrolase-1 domain in the interval 81–376; sequence LQHGLIASAT…LPYNHLDFIW (296 aa). S171 functions as the Nucleophile in the catalytic mechanism. Residues C245 and C254 are joined by a disulfide bond. N270 is a glycosylation site (N-linked (GlcNAc...) asparagine). Residues D342 and H371 each act as charge relay system in the active site.

This sequence belongs to the AB hydrolase superfamily. Lipase family.

Its subcellular location is the secreted. The enzyme catalyses a triacylglycerol + H2O = a diacylglycerol + a fatty acid + H(+). The catalysed reaction is 1,2,3-tri-(9Z-octadecenoyl)-glycerol + H2O = 1,2-di-(9Z-octadecenoyl)-sn-glycerol + (9Z)-octadecenoate + H(+). It catalyses the reaction 1,2,3-trioctanoylglycerol + H2O = 1,2-dioctanoyl-sn-glycerol + octanoate + H(+). Catalyzes the hydrolysis of triacylglycerols to yield free fatty acids, diacylglycerol, monoacylglycerol, and glycerol. Shows a preferential hydrolysis at the sn-3 position of triacylglycerol. The polypeptide is Gastric triacylglycerol lipase (Lipf) (Mus musculus (Mouse)).